We begin with the raw amino-acid sequence, 432 residues long: Trigger factor (432 aa).

The region spanning 163-248 is the PPIase FKBP-type domain; that stretch reads GDIAVIDFEG…LKALNKKELP (86 aa).

Belongs to the FKBP-type PPIase family. Tig subfamily.

It localises to the cytoplasm. It catalyses the reaction [protein]-peptidylproline (omega=180) = [protein]-peptidylproline (omega=0). Functionally, involved in protein export. Acts as a chaperone by maintaining the newly synthesized protein in an open conformation. Functions as a peptidyl-prolyl cis-trans isomerase. The protein is Trigger factor of Thermoanaerobacter pseudethanolicus (strain ATCC 33223 / 39E) (Clostridium thermohydrosulfuricum).